An 824-amino-acid chain; its full sequence is MTTELEIDDRKEEEAQIPGETSESEEGDEPVKMNRVKRACAMAAESLKEAKRIKNMLMEEECVLQLGNCKKTASYGHRLSKTEACCPSCFSVAFRGKDYENEFTIWKQKAMDGQTHVRSEQFVKRYVNSCFLPYYAKCHQCSKYSKLITSDSLSAQQLSDFKCDCASTIESPKIERVREDSEWCFNEFGHPPLLQNNISYDLLVDHYVTRTTGMDATCQEKAALIDNGGIEFRDTRRIMNMFYVPFTDVIANIVHPEFMETDEKFAFPKFADDPISIYYLQVRNTIIAMWLKHPFVELTVKMIEPQIIVRGHARIFFIEHLIHPILEFLTIKGVVNYGAFDFRIDPLNGMRPKIAIIGAGISGISTARHLKHLGIDAVLFEAKDRFGGRMMDDQSLGVSVGKGAQIIVGNINNPITLLCEQIGIKYRNSNFFCPLIDENGRCFTLERKELDDQVDLHYNNVLDAIRNKYQSDRNFPDVPLEVTNFRHFTEMFSKMSSGLLSAADLDSLYTPEFEKLLDFHLGNLEFSCGTHVSNLSAKDYDHNEKFGNFAGEHAVITDGAQRIIDFLATGLDIRLNCPVKCIDWGRDDRKVKIFFENAEQAAEEFDKVVITTSLSVLKSNHSKMFVPPLPIEKQKAIDDLGAGLIEKIAVKFDRRFWDTVDADGLRTEYFGKVSDCKTDRSLFNIFYDFSGKDPNGEDTFVLMSYVTAEHVNLVNVLTESEVADKFCATLRKMFPSAVINPLGHMMSHWGADRFVGMSYTFVPFGSDGDATYNQLKKSIDEKLYFAGEHTIAAEPQTMAGAYISGLREAGQIVMSLKRDSATFE.

A disordered region spans residues Met1 to Val31. Residues Pro245–Pro346 form the SWIRM domain. Residues Pro352–Ile407, Val579, Glu788, and Gln796–Met798 contribute to the FAD site.

Belongs to the flavin monoamine oxidase family. Requires FAD as cofactor. In hermaphrodites, expressed in gut cells, embryonic cells and sheath cells. Not expressed in sperm or pharyngeal neurons.

The protein resides in the nucleus. It carries out the reaction N(6),N(6)-dimethyl-L-lysyl(4)-[histone H3] + 2 A + 2 H2O = L-lysyl(4)-[histone H3] + 2 formaldehyde + 2 AH2. In terms of biological role, histone demethylase that demethylates di-methylated 'Lys-4' of histone H3, a specific tag for epigenetic transcriptional activation, thereby acting as a corepressor. Acts by oxidizing the substrate by FAD to generate the corresponding imine that is subsequently hydrolyzed. Plays a role in the mitotic development of the germline. May be involved in H3 demethylation in mitotic cells including gut and embryonic cells. Plays a role in sensitivity upon interstrand cross-link DNA damage, probably by positively regulating the expression of mlh-1. Plays a role in developmental growth and lifespan regulation in response to ultraviolet-induced damage. No obvious role in larval development, sex chromosome segregation or for regulating meiotic crossover frequency. The protein is Lysine-specific histone demethylase 1B homolog of Caenorhabditis elegans.